The chain runs to 285 residues: Inositol oxygenase (285 aa).

Substrate is bound at residue Arg29. Ser33 carries the post-translational modification Phosphoserine. 85–87 is a substrate binding site; it reads DES. The Fe cation site is built by His98, His123, and Asp124. Substrate contacts are provided by residues Lys127 and 141-142; that span reads GD. Positions 194, 220, and 253 each coordinate Fe cation. 220–221 is a substrate binding site; the sequence is HS.

This sequence belongs to the myo-inositol oxygenase family. Fe cation is required as a cofactor. Kidney specific.

It localises to the cytoplasm. It carries out the reaction myo-inositol + O2 = D-glucuronate + H2O + H(+). Its pathway is polyol metabolism; myo-inositol degradation into D-glucuronate; D-glucuronate from myo-inositol: step 1/1. The polypeptide is Inositol oxygenase (Miox) (Rattus norvegicus (Rat)).